A 292-amino-acid polypeptide reads, in one-letter code: Glycine--tRNA ligase alpha subunit (292 aa).

This sequence belongs to the class-II aminoacyl-tRNA synthetase family. In terms of assembly, tetramer of two alpha and two beta subunits.

It is found in the cytoplasm. It catalyses the reaction tRNA(Gly) + glycine + ATP = glycyl-tRNA(Gly) + AMP + diphosphate. In Synechococcus sp. (strain ATCC 27144 / PCC 6301 / SAUG 1402/1) (Anacystis nidulans), this protein is Glycine--tRNA ligase alpha subunit.